Reading from the N-terminus, the 589-residue chain is Transmembrane 9 superfamily member 3 (589 aa).

The signal sequence occupies residues 1-28 (MRPLPGALGVAAAAALWLLLLLLPRTRA). Residue N174 is glycosylated (N-linked (GlcNAc...) asparagine). 5 helical membrane passes run 224-244 (FSIF…SMIL), 294-314 (LIGS…VAMI), 328-348 (AIFV…SLYA), 360-380 (FIGA…INFI), and 389-409 (AIPF…ILPL). N419 carries an N-linked (GlcNAc...) asparagine glycan. Helical transmembrane passes span 449 to 469 (IVCL…YFIF), 482 to 502 (GFMM…TIVC), 519 to 539 (FLSA…YYFF), and 551 to 571 (FYFG…GAIG).

This sequence belongs to the nonaspanin (TM9SF) (TC 9.A.2) family.

The protein resides in the membrane. The sequence is that of Transmembrane 9 superfamily member 3 (TM9SF3) from Homo sapiens (Human).